Here is a 60-residue protein sequence, read N- to C-terminus: MDPCDCSKSGTCNCGGSCTCTNCSCKSCKKSCCPCCPSGCTKCASGCVCKGKTCDTSCCQ.

Positions 1-28 (MDPCDCSKSGTCNCGGSCTCTNCSCKSC) are beta. The a divalent metal cation site is built by Cys-4, Cys-6, Cys-12, Cys-14, Cys-18, Cys-20, Cys-23, Cys-25, Cys-28, Cys-32, Cys-33, Cys-35, Cys-36, Cys-40, Cys-43, Cys-47, Cys-49, Cys-54, Cys-58, and Cys-59. An alpha region spans residues 29–60 (KKSCCPCCPSGCTKCASGCVCKGKTCDTSCCQ).

Belongs to the metallothionein superfamily. Type 1 family.

In terms of biological role, metallothioneins have a high content of cysteine residues that bind various heavy metals. This Chionodraco hamatus (Antarctic teleost icefish) protein is Metallothionein A (mta).